Consider the following 468-residue polypeptide: Glutamate--tRNA ligase (468 aa).

The 'HIGH' region motif lies at 12 to 22 (PSPTGFIHLGN). The 'KMSKS' region motif lies at 244–248 (KMSKR). Lysine 247 serves as a coordination point for ATP.

It belongs to the class-I aminoacyl-tRNA synthetase family. Glutamate--tRNA ligase type 1 subfamily. As to quaternary structure, monomer.

It localises to the cytoplasm. The enzyme catalyses tRNA(Glu) + L-glutamate + ATP = L-glutamyl-tRNA(Glu) + AMP + diphosphate. Functionally, catalyzes the attachment of glutamate to tRNA(Glu) in a two-step reaction: glutamate is first activated by ATP to form Glu-AMP and then transferred to the acceptor end of tRNA(Glu). This Polynucleobacter necessarius subsp. necessarius (strain STIR1) protein is Glutamate--tRNA ligase.